A 755-amino-acid polypeptide reads, in one-letter code: Primary amine oxidase (755 aa).

Positions 1–30 (MANGLKFSPRKTALALAVAVVCAWQSPVFA) are cleaved as a signal peptide. Substrate contacts are provided by residues 411-422 (YLDSGDYGMGTL) and 493-498 (VGNYDY). Asp-413 serves as the catalytic Proton acceptor. Tyr-496 acts as the Schiff-base intermediate with substrate; via topaquinone in catalysis. At Tyr-496 the chain carries 2',4',5'-topaquinone. Residues His-554 and His-556 each coordinate Cu cation. Asp-563, Leu-564, Asp-565, Glu-603, Tyr-697, Asp-700, Glu-702, and Asp-708 together coordinate Ca(2+). Asp-563 provides a ligand contact to Mn(2+). Asp-565 is a Mn(2+) binding site. Asp-708 provides a ligand contact to Mn(2+). His-719 contacts Cu cation.

The protein belongs to the copper/topaquinone oxidase family. In terms of assembly, homodimer. Cu cation serves as cofactor. Requires Zn(2+) as cofactor. It depends on Ca(2+) as a cofactor. The cofactor is L-topaquinone. Mn(2+) is required as a cofactor. Topaquinone (TPQ) is generated by copper-dependent autoxidation of a specific tyrosyl residue.

The protein resides in the periplasm. It carries out the reaction a primary methyl amine + O2 + H2O = an aldehyde + H2O2 + NH4(+). Its function is as follows. Active on tyramine, tryptamine, beta-phenethylamine and dopamine. The protein is Primary amine oxidase (maoA) of Klebsiella aerogenes (Enterobacter aerogenes).